A 398-amino-acid chain; its full sequence is Ras-related GTP-binding protein C (398 aa).

A disordered region spans residues Met-1–Ala-56. Ser-2 carries the N-acetylserine modification. Phosphoserine occurs at positions 2 and 15. Residues Ala-39–Gly-55 are compositionally biased toward gly residues. Positions 70, 71, 72, 73, 74, and 75 each coordinate GDP. Residue Lys-73 participates in GTP binding. The GTP site is built by Thr-89 and Thr-95. Position 95 is a phosphothreonine (Thr-95). GDP contacts are provided by His-177, Lys-178, Asp-180, and Ile-219. Asp-180 serves as a coordination point for GTP.

This sequence belongs to the GTR/RAG GTP-binding protein family. Forms a heterodimer with RRAGA, in a sequence-independent manner, and RRAGB. Heterodimerization stabilizes proteins of the heterodimer. The GDP-bound form of RRAGC (in complex with the GTP-bound form of RRAGA or RRAGB), interacts with RPTOR, thereby promoting recruitment of mTORC1 to the lysosomes. Component of the lysosomal folliculin complex (LFC), composed of FLCN, FNIP1 (or FNIP2), RagA/RRAGA or RagB/RRAGB GDP-bound, RagC/RRAGC or RagD/RRAGD GTP-bound, and Ragulator. Interacts with NOL8. Interacts with SH3BP4; the interaction with this negative regulator is most probably direct, preferentially occurs with the inactive GDP-bound form of RRAGB, is negatively regulated by amino acids and prevents interaction with RPTOR. The Rag heterodimer interacts with SLC38A9; the probable amino acid sensor. Interacts with SESN1, SESN2 and SESN3. Interacts with PIP4P1. The GDP-bound form interacts with TFEB. The GDP-bound form interacts with TFE3. Expressed most abundantly in kidney. Moderately expressed in brain, ovary, and testis, and detected at lower levels in heart, liver, and muscle. Not detected in lung, spleen, and small intestine. Widely expressed in tumor cells, with expression being specifically up-regulated in highly metastatic cells.

It localises to the cytoplasm. The protein localises to the nucleus. The protein resides in the lysosome membrane. The enzyme catalyses GTP + H2O = GDP + phosphate + H(+). With respect to regulation, the activation of RagC/RRAGC is mediated by a GTPase activating protein (GAP). In high-amino acid conditions, activated by GTPase activating protein FLCN that stimulates RRAGC GTPase activity to turn it into its active GDP-bound form. In response to amino acid depletion, the GATOR1 complex inactivates RagC/RRAGC by securing the GTP-bound inactive form. Functionally, guanine nucleotide-binding protein that plays a crucial role in the cellular response to amino acid availability through regulation of the mTORC1 signaling cascade. Forms heterodimeric Rag complexes with RagA/RRAGA or RagB/RRAGB and cycles between an inactive GTP-bound and an active GDP-bound form: RagC/RRAGC is in its active form when GDP-bound RagC/RRAGC forms a complex with GTP-bound RagA/RRAGA (or RagB/RRAGB) and in an inactive form when GTP-bound RagC/RRAGC heterodimerizes with GDP-bound RagA/RRAGA (or RagB/RRAGB). In its GDP-bound active form, promotes the recruitment of mTORC1 to the lysosomes and its subsequent activation by the GTPase RHEB. This is a crucial step in the activation of the MTOR signaling cascade by amino acids. Also plays a central role in the non-canonical mTORC1 complex, which acts independently of RHEB and specifically mediates phosphorylation of MiT/TFE factors TFEB and TFE3: GDP-bound RagC/RRAGC mediates recruitment of MiT/TFE factors TFEB and TFE3. This chain is Ras-related GTP-binding protein C, found in Mus musculus (Mouse).